The sequence spans 698 residues: Sucrose non-fermenting protein kinase 1 (698 aa).

Residues 1–48 are disordered; the sequence is MAPRGFEDEELTISLSSSHVRRPQQQQPPPPTQQQHAHQPGSRPADAP. The Protein kinase domain maps to 62-313; that stretch reads YKVLRTLGEG…IEDIRADPWF (252 aa). Residues 68–76 and Lys91 each bind ATP; that span reads LGEGSFGKV. Residue Asp184 is the Proton acceptor of the active site. Positions 320-417 are auto-inhibitory domain (AID); the sequence is YLQLPVEEFF…ALLEPEGSSP (98 aa). In terms of domain architecture, UBA spans 360-397; the sequence is VTEKISKTMGYGKNDVEEALQASEPSAIKDAYMIVREN. Disordered regions lie at residues 410 to 435, 482 to 525, and 564 to 597; these read LEPE…TTTA, TRTD…KKTK, and ESRH…IDPM. Positions 415-435 are enriched in low complexity; sequence SSPMLSMSSARSATSTTTTTA. Composition is skewed to basic and acidic residues over residues 484–493 and 564–573; these read TDAEKEETSR and ESRHAEERAE.

It belongs to the protein kinase superfamily. CAMK Ser/Thr protein kinase family. SNF1 subfamily. As to quaternary structure, component of the AMP-activated protein kinase complex also known as the SNF1 kinase complex (Snf1c), a heterotrimeric complex composed of a catalytic subunit alpha and 2 regulatory subunits beta and gamma.

The protein resides in the cytoplasm. It is found in the nucleus. The enzyme catalyses L-seryl-[protein] + ATP = O-phospho-L-seryl-[protein] + ADP + H(+). The catalysed reaction is L-threonyl-[protein] + ATP = O-phospho-L-threonyl-[protein] + ADP + H(+). In terms of biological role, catalytic subunit of the AMP-activated protein kinase complex also known as the SNF1 kinase complex (Snf1c), a central regulator of cellular energy homeostasis, which, in response to a fall in intracellular ATP levels, activates energy-producing pathways and inhibits energy-consuming processes. The complex phosphorylates histone H3 to form H3S10ph, which promotes H3K14ac formation, leading to transcriptional activation through TBP recruitment to the promoters. Activates the expression of the galactose oxidase (GOA) gene and of several cell wall-degrading enzymes (CWDEs) such as pectate lyase, xylanase and glucanase. Plays an important role in sudden death syndrome (SDS) by controlling the colonization of the infected roots. This is Sucrose non-fermenting protein kinase 1 from Fusarium virguliforme.